The sequence spans 289 residues: Probable aquaporin PIP-type 7a (289 aa).

Positions 1-39 (MEAKEQDVSLGANKFPERQPLGIAAQSQDEPKDYQEPPP) are disordered. Residues 1 to 57 (MEAKEQDVSLGANKFPERQPLGIAAQSQDEPKDYQEPPPAPLFEPSELTSWSFYRAG) lie on the Cytoplasmic side of the membrane. A helical membrane pass occupies residues 58–78 (IAEFIATFLFLYITVLTVMGV). The Extracellular segment spans residues 79 to 91 (VRESSKCKTVGIQ). A helical membrane pass occupies residues 92–112 (GIAWAFGGMIFALVYCTAGIS). Over 113 to 135 (GGHINPAVTFGLFLARKLSLTRA) the chain is Cytoplasmic. The NPA 1 motif lies at 117 to 119 (NPA). Residues 136-156 (IFYMVMQVLGAICGAGVVKGF) form a helical membrane-spanning segment. The Extracellular segment spans residues 157 to 178 (EGKQRFGDLNGGANFVAPGYTK). The helical transmembrane segment at 179–199 (GDGLGAEIVGTFILVYTVFSA) threads the bilayer. At 200–212 (TDAKRSARDSHVP) the chain is on the cytoplasmic side. A helical transmembrane segment spans residues 213-233 (ILAPLPIGFAVFLVHLATIPI). Topologically, residues 234-260 (TGTGINPARSLGAAIVFNKKIGWNDHW) are extracellular. An NPA 2 motif is present at residues 239–241 (NPA). The chain crosses the membrane as a helical span at residues 261-281 (IFWVGPFIGAALAALYHQVVI). Residues 282–289 (RAIPFKSK) lie on the Cytoplasmic side of the membrane.

Belongs to the MIP/aquaporin (TC 1.A.8) family. PIP (TC 1.A.8.11) subfamily.

The protein resides in the cell membrane. Functionally, aquaporins facilitate the transport of water and small neutral solutes across cell membranes. This is Probable aquaporin PIP-type 7a (TRG-31) from Pisum sativum (Garden pea).